The following is a 185-amino-acid chain: Transmembrane protein 140 (185 aa).

At 1–11 (MAGPRPRWRDQ) the chain is on the cytoplasmic side. Residues 12–32 (LLFMSIIVLVIVVICLMFYAL) traverse the membrane as a helical segment. Topologically, residues 33–77 (LWEAGNLTDLPNLRIGFYNFCLWNEDTSTLQCHQFPELEALGVPR) are extracellular. Residue N38 is glycosylated (N-linked (GlcNAc...) asparagine). Residues 78-98 (VGLGLARLGVYGSLVLTLFAP) traverse the membrane as a helical segment. Residues 99–114 (QPLLLAQCNSDERAWR) are Cytoplasmic-facing. A helical transmembrane segment spans residues 115–135 (LAVGFLAVSSVLLAGGLGLFL). At 136–150 (SYVWKWVRLSLPGPG) the chain is on the extracellular side. A helical transmembrane segment spans residues 151 to 171 (FLALGSAQALLILLLIAMAVF). Residues 172 to 185 (PLRAERAESKLESC) lie on the Cytoplasmic side of the membrane.

As to expression, expression significantly higher in gliomas than in normal brain tissues.

The protein localises to the membrane. The sequence is that of Transmembrane protein 140 (TMEM140) from Homo sapiens (Human).